The chain runs to 75 residues: Transcription attenuation protein MtrB (75 aa).

It belongs to the MtrB family. As to quaternary structure, oligomer of 11 identical subunits arranged in doughnut-like structure.

Functionally, required for transcription attenuation control in the trp operon. This trans-acting factor binds to trinucleotide repeats (GAG or UAG) located in the trp leader transcript causing transcription termination. Binds the leader RNA only in presence of L-tryptophan. This is Transcription attenuation protein MtrB (mtrB) from Bacillus subtilis (strain 168).